Consider the following 157-residue polypeptide: uncharacterized protein (157 aa).

The N-acetyltransferase domain maps to 9–154 (LLINYKTLDE…ETNLNAVTNE (146 aa)).

This is an uncharacterized protein from Bacillus cereus (strain G9842).